The primary structure comprises 334 residues: Protein-methionine-sulfoxide reductase catalytic subunit MsrP (334 aa).

Positions 1-44 form a signal peptide, tat-type signal; it reads MKAVNPLTENDVTPESLFNARRRTVLKMLGMSAAALSLPGAARA. Mo-molybdopterin is bound by residues Asn88, 91–92, Cys146, Thr181, Asn233, Arg238, and 249–251; these read YE and GIK.

This sequence belongs to the MsrP family. Heterodimer of a catalytic subunit (MsrP) and a heme-binding subunit (MsrQ). It depends on Mo-molybdopterin as a cofactor. Post-translationally, predicted to be exported by the Tat system. The position of the signal peptide cleavage has not been experimentally proven.

The protein resides in the periplasm. The catalysed reaction is L-methionyl-[protein] + a quinone + H2O = L-methionyl-(S)-S-oxide-[protein] + a quinol. The enzyme catalyses L-methionyl-[protein] + a quinone + H2O = L-methionyl-(R)-S-oxide-[protein] + a quinol. In terms of biological role, part of the MsrPQ system that repairs oxidized periplasmic proteins containing methionine sulfoxide residues (Met-O), using respiratory chain electrons. Thus protects these proteins from oxidative-stress damage caused by reactive species of oxygen and chlorine generated by the host defense mechanisms. MsrPQ is essential for the maintenance of envelope integrity under bleach stress, rescuing a wide series of structurally unrelated periplasmic proteins from methionine oxidation. The catalytic subunit MsrP is non-stereospecific, being able to reduce both (R-) and (S-) diastereoisomers of methionine sulfoxide. The chain is Protein-methionine-sulfoxide reductase catalytic subunit MsrP from Erwinia tasmaniensis (strain DSM 17950 / CFBP 7177 / CIP 109463 / NCPPB 4357 / Et1/99).